The sequence spans 89 residues: uncharacterized protein (89 aa).

2 consecutive transmembrane segments (helical) span residues 1-21 (MFLALTSIAIPAAIVIPISLI) and 28-48 (GISLTFSMTIGFVGLILTIAA).

Its subcellular location is the cell membrane. This is an uncharacterized protein from Methanocaldococcus jannaschii (strain ATCC 43067 / DSM 2661 / JAL-1 / JCM 10045 / NBRC 100440) (Methanococcus jannaschii).